Consider the following 191-residue polypeptide: Large ribosomal subunit protein uL6A (191 aa).

The protein belongs to the universal ribosomal protein uL6 family. As to quaternary structure, component of the large ribosomal subunit (LSU). Mature yeast ribosomes consist of a small (40S) and a large (60S) subunit. The 40S small subunit contains 1 molecule of ribosomal RNA (18S rRNA) and 33 different proteins (encoded by 57 genes). The large 60S subunit contains 3 rRNA molecules (25S, 5.8S and 5S rRNA) and 46 different proteins (encoded by 81 genes). uL6 lines the binding pocket for eukaryotic elongation factor 2 (eEF2).

The protein localises to the cytoplasm. Its function is as follows. Component of the ribosome, a large ribonucleoprotein complex responsible for the synthesis of proteins in the cell. The small ribosomal subunit (SSU) binds messenger RNAs (mRNAs) and translates the encoded message by selecting cognate aminoacyl-transfer RNA (tRNA) molecules. The large subunit (LSU) contains the ribosomal catalytic site termed the peptidyl transferase center (PTC), which catalyzes the formation of peptide bonds, thereby polymerizing the amino acids delivered by tRNAs into a polypeptide chain. The nascent polypeptides leave the ribosome through a tunnel in the LSU and interact with protein factors that function in enzymatic processing, targeting, and the membrane insertion of nascent chains at the exit of the ribosomal tunnel. The polypeptide is Large ribosomal subunit protein uL6A (Saccharomyces cerevisiae (strain ATCC 204508 / S288c) (Baker's yeast)).